Reading from the N-terminus, the 253-residue chain is uncharacterized protein (253 aa).

EamA domains follow at residues 1 to 97 (MFFM…IYSL) and 116 to 237 (FFWA…ISRL). 8 helical membrane-spanning segments follow: residues 2–22 (FFMA…AKQL), 28–48 (IFLL…GLLY), 53–73 (ESAV…TLIL), 80–100 (TEVI…LNLG), 101–121 (IYFS…WALF), 138–158 (AVQL…QFYF), 162–182 (INFL…SFYL), and 214–234 (GVNV…GILI).

The protein belongs to the EamA transporter family.

It localises to the cell membrane. This is an uncharacterized protein from Acidianus ambivalens (Desulfurolobus ambivalens).